Here is a 239-residue protein sequence, read N- to C-terminus: uncharacterized protein (239 aa).

The tract at residues 104–127 is disordered; the sequence is LPATSQSSQPKSTNSSTESSSIGQ. A compositionally biased stretch (low complexity) spans 107 to 127; that stretch reads TSQSSQPKSTNSSTESSSIGQ. Residues 134–202 adopt a coiled-coil conformation; sequence ENEINLNKNK…HFIQNNQESF (69 aa). Residues 211–231 traverse the membrane as a helical segment; that stretch reads VKIGSAFIIYIFYNVLFFIIV.

It is found in the membrane. This is an uncharacterized protein from Dictyostelium discoideum (Social amoeba).